The sequence spans 380 residues: Genome polyprotein (380 aa).

2 disordered regions span residues 54–154 and 349–380; these read GTVD…TGKI and GNVG…QQHH. A compositionally biased stretch (low complexity) spans 67–84; it reads QGTTPPATGSGAKPATSG. Gly residues-rich tracts occupy residues 85–99 and 106–123; these read AGSG…GVTG and SGTG…GSGS. The span at 129-140 shows a compositional bias: low complexity; the sequence is NTGSAGTNATGG.

It belongs to the potyviridae genome polyprotein family. Genome polyprotein of potyviruses undergoes post-translational proteolytic processing by the main proteinase NIa-pro resulting in the production of at least ten individual proteins. The P1 proteinase and the HC-pro cleave only their respective C-termini autocatalytically. 6K1 is essential for proper proteolytic separation of P3 from CI.

The protein localises to the virion. It carries out the reaction RNA(n) + a ribonucleoside 5'-triphosphate = RNA(n+1) + diphosphate. An RNA-dependent RNA polymerase that plays an essential role in the virus replication. Its function is as follows. Involved in aphid transmission, cell-to-cell and systemis movement, encapsidation of the viral RNA and in the regulation of viral RNA amplification. This is Genome polyprotein from Sorghum halepense (Johnson grass).